The following is a 72-amino-acid chain: Translation initiation factor IF-1 1 (72 aa).

Residues 1 to 72 (MSKDDVIQMA…TRARIIFRAK (72 aa)) form the S1-like domain.

The protein belongs to the IF-1 family. Component of the 30S ribosomal translation pre-initiation complex which assembles on the 30S ribosome in the order IF-2 and IF-3, IF-1 and N-formylmethionyl-tRNA(fMet); mRNA recruitment can occur at any time during PIC assembly.

It is found in the cytoplasm. One of the essential components for the initiation of protein synthesis. Stabilizes the binding of IF-2 and IF-3 on the 30S subunit to which N-formylmethionyl-tRNA(fMet) subsequently binds. Helps modulate mRNA selection, yielding the 30S pre-initiation complex (PIC). Upon addition of the 50S ribosomal subunit IF-1, IF-2 and IF-3 are released leaving the mature 70S translation initiation complex. This Polynucleobacter asymbioticus (strain DSM 18221 / CIP 109841 / QLW-P1DMWA-1) (Polynucleobacter necessarius subsp. asymbioticus) protein is Translation initiation factor IF-1 1.